The chain runs to 252 residues: Small ribosomal subunit protein eS1 (252 aa).

Belongs to the eukaryotic ribosomal protein eS1 family. Component of the small ribosomal subunit. Mature ribosomes consist of a small (40S) and a large (60S) subunit. The 40S subunit contains about 33 different proteins and 1 molecule of RNA (18S). The 60S subunit contains about 49 different proteins and 3 molecules of RNA (25S, 5.8S and 5S).

It is found in the cytoplasm. The chain is Small ribosomal subunit protein eS1 from Enterocytozoon bieneusi (strain H348) (Microsporidian parasite).